The following is a 497-amino-acid chain: Histidine--tRNA ligase (497 aa).

It belongs to the class-II aminoacyl-tRNA synthetase family. As to quaternary structure, homodimer.

The protein resides in the cytoplasm. It carries out the reaction tRNA(His) + L-histidine + ATP = L-histidyl-tRNA(His) + AMP + diphosphate + H(+). The sequence is that of Histidine--tRNA ligase from Dinoroseobacter shibae (strain DSM 16493 / NCIMB 14021 / DFL 12).